The chain runs to 364 residues: Guanine nucleotide-binding protein alpha-6 subunit (364 aa).

Residues 1-29 are disordered; sequence MGAGATGLRGARLSPEERANSSKSRAIDR. A lipid anchor (N-myristoyl glycine) is attached at G2. Residues 14–29 are compositionally biased toward basic and acidic residues; it reads SPEERANSSKSRAIDR. In terms of domain architecture, G-alpha spans 40–363; that stretch reads NRFKILLLGT…NENLRSAGLH (324 aa). A G1 motif region spans residues 43–56; sequence KILLLGTAESGKST. GTP contacts are provided by residues 48-55, 186-192, 211-215, 280-283, and A335; these read GTAESGKS, VHCRIST, DVGGQ, and NKYD. S55 and T192 together coordinate Mg(2+). The tract at residues 184 to 192 is G2 motif; it reads DIVHCRIST. The tract at residues 207–216 is G3 motif; the sequence is FKMVDVGGQR. A G4 motif region spans residues 276–283; that stretch reads VLFLNKYD. The segment at 333–338 is G5 motif; the sequence is TTATDT.

This sequence belongs to the G-alpha family. In terms of assembly, g proteins are composed of 3 units; alpha, beta and gamma. The alpha chain contains the guanine nucleotide binding site.

In terms of biological role, guanine nucleotide-binding proteins (G proteins) are involved as modulators or transducers in various transmembrane signaling systems. In Caenorhabditis elegans, this protein is Guanine nucleotide-binding protein alpha-6 subunit (gpa-6).